The chain runs to 336 residues: Holliday junction branch migration complex subunit RuvB (336 aa).

A large ATPase domain (RuvB-L) region spans residues 1-183 (MTEEHLTSQE…FGIVEHMQYY (183 aa)). Residues Leu-22, Arg-23, Gly-64, Lys-67, Thr-68, Thr-69, 130 to 132 (EDF), Arg-173, Tyr-183, and Arg-220 contribute to the ATP site. Thr-68 contacts Mg(2+). Residues 184–254 (QVEDLEKIIL…TTAMALKQLQ (71 aa)) are small ATPAse domain (RuvB-S). The segment at 257-336 (SAGLDQTDRK…LNLPLPGEEE (80 aa)) is head domain (RuvB-H). DNA contacts are provided by Arg-293 and Arg-317.

The protein belongs to the RuvB family. As to quaternary structure, homohexamer. Forms an RuvA(8)-RuvB(12)-Holliday junction (HJ) complex. HJ DNA is sandwiched between 2 RuvA tetramers; dsDNA enters through RuvA and exits via RuvB. An RuvB hexamer assembles on each DNA strand where it exits the tetramer. Each RuvB hexamer is contacted by two RuvA subunits (via domain III) on 2 adjacent RuvB subunits; this complex drives branch migration. In the full resolvosome a probable DNA-RuvA(4)-RuvB(12)-RuvC(2) complex forms which resolves the HJ.

Its subcellular location is the cytoplasm. It carries out the reaction ATP + H2O = ADP + phosphate + H(+). Its function is as follows. The RuvA-RuvB-RuvC complex processes Holliday junction (HJ) DNA during genetic recombination and DNA repair, while the RuvA-RuvB complex plays an important role in the rescue of blocked DNA replication forks via replication fork reversal (RFR). RuvA specifically binds to HJ cruciform DNA, conferring on it an open structure. The RuvB hexamer acts as an ATP-dependent pump, pulling dsDNA into and through the RuvAB complex. RuvB forms 2 homohexamers on either side of HJ DNA bound by 1 or 2 RuvA tetramers; 4 subunits per hexamer contact DNA at a time. Coordinated motions by a converter formed by DNA-disengaged RuvB subunits stimulates ATP hydrolysis and nucleotide exchange. Immobilization of the converter enables RuvB to convert the ATP-contained energy into a lever motion, pulling 2 nucleotides of DNA out of the RuvA tetramer per ATP hydrolyzed, thus driving DNA branch migration. The RuvB motors rotate together with the DNA substrate, which together with the progressing nucleotide cycle form the mechanistic basis for DNA recombination by continuous HJ branch migration. Branch migration allows RuvC to scan DNA until it finds its consensus sequence, where it cleaves and resolves cruciform DNA. The protein is Holliday junction branch migration complex subunit RuvB of Lactobacillus delbrueckii subsp. bulgaricus (strain ATCC 11842 / DSM 20081 / BCRC 10696 / JCM 1002 / NBRC 13953 / NCIMB 11778 / NCTC 12712 / WDCM 00102 / Lb 14).